The primary structure comprises 551 residues: Oleuropein beta-glucosidase (551 aa).

The segment covering 1-27 has biased composition (polar residues); that stretch reads MDIQSNVLTITSGSTPTDTSSNGQAAK. The interval 1–33 is disordered; sequence MDIQSNVLTITSGSTPTDTSSNGQAAKSTKERI. A beta-D-glucoside contacts are provided by residues Gln-52, His-156, 201 to 202, Tyr-363, Glu-433, Trp-482, 489 to 490, and Phe-498; these read NE and EW. The active-site Proton donor is Glu-202. Glu-433 serves as the catalytic Nucleophile. Positions 502 to 551 are required for the homomultimerization; the sequence is YVDYANGRYTRLPKRSAVWWRNFLTKPTAVPLKNEPEKSEDRRKRLRGST. The tract at residues 532-551 is disordered; the sequence is PLKNEPEKSEDRRKRLRGST. Positions 535–544 are enriched in basic and acidic residues; the sequence is NEPEKSEDRR. Positions 542 to 550 match the Nuclear localization signal motif; the sequence is DRRKRLRGS.

This sequence belongs to the glycosyl hydrolase 1 family. As to quaternary structure, homomultimer. Native form of the enzyme requires at least an octamer conformation. In terms of tissue distribution, expressed in expanding leaves and in young drupes, mostly in the developing seed coat tissues, the perisperm and the mesocarp. Also detected in shoot and root meristems, flower buds, developing ovaries and tapetal cells of the anther. Not detected in embryos or endosperm, or in leaf trichomes.

It localises to the nucleus. It carries out the reaction oleuropein + H2O = oleuropein aglycone + D-glucose. In terms of biological role, major beta-glucosidase activating oleuropein into a potent protein cross-linking agent. No activity with rutin, luteolin or p-nitrophenyl-beta-glucopyranoside as substrates. The sequence is that of Oleuropein beta-glucosidase from Olea europaea (Common olive).